The sequence spans 778 residues: Lon protease (778 aa).

Residues leucine 4–leucine 187 enclose the Lon N-terminal domain. Residue glycine 346–threonine 353 coordinates ATP. Residues threonine 581–proline 762 form the Lon proteolytic domain. Active-site residues include serine 668 and lysine 711.

It belongs to the peptidase S16 family. Homohexamer. Organized in a ring with a central cavity.

The protein localises to the cytoplasm. It carries out the reaction Hydrolysis of proteins in presence of ATP.. Its function is as follows. ATP-dependent serine protease that mediates the selective degradation of mutant and abnormal proteins as well as certain short-lived regulatory proteins. Required for cellular homeostasis and for survival from DNA damage and developmental changes induced by stress. Degrades polypeptides processively to yield small peptide fragments that are 5 to 10 amino acids long. Binds to DNA in a double-stranded, site-specific manner. The sequence is that of Lon protease from Salinispora arenicola (strain CNS-205).